Here is an 85-residue protein sequence, read N- to C-terminus: Small ribosomal subunit protein bS20 (85 aa).

Belongs to the bacterial ribosomal protein bS20 family.

Its function is as follows. Binds directly to 16S ribosomal RNA. The protein is Small ribosomal subunit protein bS20 of Ruminiclostridium cellulolyticum (strain ATCC 35319 / DSM 5812 / JCM 6584 / H10) (Clostridium cellulolyticum).